The chain runs to 112 residues: C-X-C motif chemokine 6 (112 aa).

A signal peptide spans 1–36 (MRLLSSRAARVSGPSGSLCALLALLLLTPPGPLASA). 2 disulfide bridges follow: Cys48-Cys74 and Cys50-Cys90.

Belongs to the intercrine alpha (chemokine CxC) family.

The protein resides in the secreted. Functionally, chemotactic for neutrophil granulocytes. Signals through binding and activation of its receptors (CXCR1 and CXCR2). In addition to its chemotactic and angiogenic properties, it has strong antibacterial activity against Gram-positive and Gram-negative bacteria (90-fold-higher when compared to CXCL5 and CXCL7). The protein is C-X-C motif chemokine 6 (CXCL6) of Bos taurus (Bovine).